A 319-amino-acid polypeptide reads, in one-letter code: Transcriptional regulator LsrR (319 aa).

The segment at residues 32-55 (QSEISERLGLTRLKVSRLLEKGHQ) is a DNA-binding region (H-T-H motif).

Belongs to the SorC transcriptional regulatory family.

The protein localises to the cytoplasm. Its activity is regulated as follows. Inactivated by phosphorylated autoinducer-2 (phospho-AI-2). Phospho-AI-2 acts by binding to LsrR, which is then unable to bind to the promoter regions, allowing the transcription of the target genes. In terms of biological role, transcriptional regulator that represses the expression of the lsr operon in the absence of the quorum-sensing signaling molecule autoinducer 2 (AI-2). It also represses the expression of the lsrRK operon. Acts by binding to the intergenic region between the lsr operon and lsrR. In the presence of phosphorylated autoinducer-2 (phospho-AI-2), LsrR is inactivated, leading to the transcription of the genes. The sequence is that of Transcriptional regulator LsrR (lsrR) from Salmonella choleraesuis (strain SC-B67).